Reading from the N-terminus, the 554-residue chain is Glutamine--tRNA ligase (554 aa).

Residues 34-44 (PEPNGYLHIGH) carry the 'HIGH' region motif. ATP contacts are provided by residues 35-37 (EPN) and 41-47 (HIGHAKS). L-glutamine is bound by residues D67 and Y212. Residues T231, 261–262 (RL), and 269–271 (MSK) contribute to the ATP site. The 'KMSKS' region signature appears at 268-272 (VMSKR). The interaction with tRNA stretch occupies residues 317–324 (TKQDNTIE).

The protein belongs to the class-I aminoacyl-tRNA synthetase family. In terms of assembly, monomer.

It is found in the cytoplasm. It catalyses the reaction tRNA(Gln) + L-glutamine + ATP = L-glutaminyl-tRNA(Gln) + AMP + diphosphate. The protein is Glutamine--tRNA ligase of Shigella dysenteriae serotype 1 (strain Sd197).